The following is a 253-amino-acid chain: 5'-nucleotidase SurE (253 aa).

The a divalent metal cation site is built by D8, D9, S40, and N97.

Belongs to the SurE nucleotidase family. A divalent metal cation is required as a cofactor.

Its subcellular location is the cytoplasm. It catalyses the reaction a ribonucleoside 5'-phosphate + H2O = a ribonucleoside + phosphate. Functionally, nucleotidase that shows phosphatase activity on nucleoside 5'-monophosphates. The chain is 5'-nucleotidase SurE from Desulforamulus reducens (strain ATCC BAA-1160 / DSM 100696 / MI-1) (Desulfotomaculum reducens).